We begin with the raw amino-acid sequence, 320 residues long: GTP 3',8-cyclase (320 aa).

One can recognise a Radical SAM core domain in the interval 5–222 (KLSRPLKVLR…LMKKEFTFYP (218 aa)). Arginine 14 lines the GTP pocket. 3 residues coordinate [4Fe-4S] cluster: cysteine 21, cysteine 25, and cysteine 28. Arginine 65 is a binding site for GTP. S-adenosyl-L-methionine is bound at residue glycine 69. A GTP-binding site is contributed by threonine 96. Serine 120 lines the S-adenosyl-L-methionine pocket. Position 157 (lysine 157) interacts with GTP. Methionine 191 is an S-adenosyl-L-methionine binding site. The [4Fe-4S] cluster site is built by cysteine 253 and cysteine 256. 258 to 260 (RIR) serves as a coordination point for GTP. Cysteine 270 is a binding site for [4Fe-4S] cluster.

The protein belongs to the radical SAM superfamily. MoaA family. In terms of assembly, monomer and homodimer. [4Fe-4S] cluster is required as a cofactor.

The enzyme catalyses GTP + AH2 + S-adenosyl-L-methionine = (8S)-3',8-cyclo-7,8-dihydroguanosine 5'-triphosphate + 5'-deoxyadenosine + L-methionine + A + H(+). It functions in the pathway cofactor biosynthesis; molybdopterin biosynthesis. Catalyzes the cyclization of GTP to (8S)-3',8-cyclo-7,8-dihydroguanosine 5'-triphosphate. The chain is GTP 3',8-cyclase from Aquifex aeolicus (strain VF5).